Reading from the N-terminus, the 454-residue chain is Aminodeoxychorismate synthase component 1 (454 aa).

L-tryptophan-binding positions include serine 37, 44–47, and 241–243; these read YNRF and PFS. Glutamate 259 acts as the Proton donor in catalysis. Lysine 275 functions as the N6-(4-deoxychorismate)-lysine intermediate in the catalytic mechanism.

The protein belongs to the anthranilate synthase component I family. Monomer. Heterodimer consisting of two non-identical subunits: a glutamine amidotransferase subunit (PabA) and a aminodeoxychorismate synthase subunit (PabB). It depends on Mg(2+) as a cofactor.

It catalyses the reaction chorismate + L-glutamine = 4-amino-4-deoxychorismate + L-glutamate. It functions in the pathway cofactor biosynthesis; tetrahydrofolate biosynthesis; 4-aminobenzoate from chorismate: step 1/2. Functionally, part of a heterodimeric complex that catalyzes the two-step biosynthesis of 4-amino-4-deoxychorismate (ADC), a precursor of p-aminobenzoate (PABA) and tetrahydrofolate. In the first step, a glutamine amidotransferase (PabA) generates ammonia as a substrate that, along with chorismate, is used in the second step, catalyzed by aminodeoxychorismate synthase (PabB) to produce ADC. The polypeptide is Aminodeoxychorismate synthase component 1 (pabB) (Salmonella typhimurium (strain LT2 / SGSC1412 / ATCC 700720)).